We begin with the raw amino-acid sequence, 260 residues long: Cytosolic Fe-S cluster assembly factor Nubp2 homolog 1 (260 aa).

14–21 (GKGGVGKS) contributes to the ATP binding site. [4Fe-4S] cluster is bound by residues C188 and C191.

Belongs to the Mrp/NBP35 ATP-binding proteins family. NUBP2/CFD1 subfamily. As to quaternary structure, heterotetramer of 2 Nubp1 and 2 Nubp2 chains. [4Fe-4S] cluster is required as a cofactor.

It is found in the cytoplasm. Functionally, component of the cytosolic iron-sulfur (Fe/S) protein assembly (CIA) machinery. Required for maturation of extramitochondrial Fe-S proteins. The Nubp1-Nubp2 heterotetramer forms a Fe-S scaffold complex, mediating the de novo assembly of an Fe-S cluster and its transfer to target apoproteins. This Drosophila yakuba (Fruit fly) protein is Cytosolic Fe-S cluster assembly factor Nubp2 homolog 1.